The sequence spans 201 residues: Potassium-transporting ATPase KdpC subunit (201 aa).

A helical membrane pass occupies residues 7–27; the sequence is PALVLLVALTAITGLAYPLAV.

This sequence belongs to the KdpC family. As to quaternary structure, the system is composed of three essential subunits: KdpA, KdpB and KdpC.

The protein resides in the cell inner membrane. In terms of biological role, part of the high-affinity ATP-driven potassium transport (or Kdp) system, which catalyzes the hydrolysis of ATP coupled with the electrogenic transport of potassium into the cytoplasm. This subunit acts as a catalytic chaperone that increases the ATP-binding affinity of the ATP-hydrolyzing subunit KdpB by the formation of a transient KdpB/KdpC/ATP ternary complex. The sequence is that of Potassium-transporting ATPase KdpC subunit from Methylorubrum extorquens (strain CM4 / NCIMB 13688) (Methylobacterium extorquens).